The chain runs to 518 residues: Arrestin-related trafficking adapter 10 (518 aa).

Residue Lys-118 forms a Glycyl lysine isopeptide (Lys-Gly) (interchain with G-Cter in ubiquitin) linkage.

It belongs to the ART10 family. Interacts with RSP5. Ubiquitinated by RSP5.

Its subcellular location is the cytoplasm. Its function is as follows. May regulate endocytosis by recruiting RSP5 ubiquitin ligase activity to specific plasma membrane proteins in response to extracellular stimuli. The polypeptide is Arrestin-related trafficking adapter 10 (ART10) (Saccharomyces cerevisiae (strain ATCC 204508 / S288c) (Baker's yeast)).